A 668-amino-acid polypeptide reads, in one-letter code: tRNA 5-methylaminomethyl-2-thiouridine biosynthesis bifunctional protein MnmC (668 aa).

The interval Met1–Glu245 is tRNA (mnm(5)s(2)U34)-methyltransferase. The segment at Ile270 to Gly668 is FAD-dependent cmnm(5)s(2)U34 oxidoreductase.

The protein in the N-terminal section; belongs to the methyltransferase superfamily. tRNA (mnm(5)s(2)U34)-methyltransferase family. It in the C-terminal section; belongs to the DAO family. FAD is required as a cofactor.

It is found in the cytoplasm. The catalysed reaction is 5-aminomethyl-2-thiouridine(34) in tRNA + S-adenosyl-L-methionine = 5-methylaminomethyl-2-thiouridine(34) in tRNA + S-adenosyl-L-homocysteine + H(+). In terms of biological role, catalyzes the last two steps in the biosynthesis of 5-methylaminomethyl-2-thiouridine (mnm(5)s(2)U) at the wobble position (U34) in tRNA. Catalyzes the FAD-dependent demodification of cmnm(5)s(2)U34 to nm(5)s(2)U34, followed by the transfer of a methyl group from S-adenosyl-L-methionine to nm(5)s(2)U34, to form mnm(5)s(2)U34. The polypeptide is tRNA 5-methylaminomethyl-2-thiouridine biosynthesis bifunctional protein MnmC (Shigella boydii serotype 18 (strain CDC 3083-94 / BS512)).